The chain runs to 451 residues: Protein NINJA homolog 1 (451 aa).

Disordered stretches follow at residues 1 to 223 (MDDE…QGNP), 321 to 346 (ISQA…DDKK), and 427 to 451 (DAPG…SAQN). A compositionally biased stretch (basic and acidic residues) spans 23-35 (KARDAPLEPKAEP). 3 stretches are compositionally biased toward polar residues: residues 38 to 49 (EESSSKGVSQTP), 86 to 103 (PGSS…QKPV), and 143 to 153 (ISISTDDGSTG). Over residues 154–163 (ENEDVAESEA) the composition is skewed to acidic residues. Positions 207-216 (SFSGSESSSG) are enriched in low complexity.

This sequence belongs to the Ninja family. In terms of assembly, interacts with TIFY10C/JAZ8. Interacts with TIFY11A/JAZ9.

Its subcellular location is the nucleus. The chain is Protein NINJA homolog 1 from Oryza sativa subsp. japonica (Rice).